The chain runs to 278 residues: MKNWRLNNVTESAFEKTGPIPRSIAKTFEKFKKELEPNSESEIIEEFRVSRYQTASSIKYLVLLVTVPLLINQASKSLVFSPFIDYFWNDNQSDIFLNESQEERAFSELQRFEEKIHFEILIGQSPPLSQETIDKEIKNKAIELAQFYVQESTDAIKNLLADILAFITFAYLIFTGGRQIAVLKSFINELIYGLSDTAKAFLIILFTDIFVGFHSTHGWEVVLENGLRHFGLPENRDLIFLFIATFPVVLDTVFKYWIFRYLNQVSPSAVATYHEMNE.

A run of 4 helical transmembrane segments spans residues 60–80 (YLVL…SLVF), 163–183 (ILAF…IAVL), 201–221 (FLII…GWEV), and 239–259 (IFLF…YWIF).

Belongs to the CemA family.

It is found in the plastid. It localises to the chloroplast inner membrane. The enzyme catalyses K(+)(in) + H(+)(out) = K(+)(out) + H(+)(in). Functionally, contributes to K(+)/H(+) antiport activity by supporting proton efflux to control proton extrusion and homeostasis in chloroplasts in a light-dependent manner to modulate photosynthesis. Prevents excessive induction of non-photochemical quenching (NPQ) under continuous-light conditions. Indirectly promotes efficient inorganic carbon uptake into chloroplasts. The chain is Potassium/proton antiporter CemA from Guillardia theta (Cryptophyte).